A 110-amino-acid polypeptide reads, in one-letter code: uncharacterized protein (110 aa).

Its subcellular location is the plastid. The protein localises to the chloroplast. This is an uncharacterized protein from Auxenochlorella pyrenoidosa (Freshwater green alga).